A 669-amino-acid chain; its full sequence is Threonine--tRNA ligase (669 aa).

In terms of domain architecture, TGS spans aspartate 3 to threonine 60. A catalytic region spans residues aspartate 260–proline 566. Zn(2+) contacts are provided by cysteine 365, histidine 416, and histidine 543.

It belongs to the class-II aminoacyl-tRNA synthetase family. Homodimer. It depends on Zn(2+) as a cofactor.

It is found in the cytoplasm. It catalyses the reaction tRNA(Thr) + L-threonine + ATP = L-threonyl-tRNA(Thr) + AMP + diphosphate + H(+). Its function is as follows. Catalyzes the attachment of threonine to tRNA(Thr) in a two-step reaction: L-threonine is first activated by ATP to form Thr-AMP and then transferred to the acceptor end of tRNA(Thr). Also edits incorrectly charged L-seryl-tRNA(Thr). In Pseudarthrobacter chlorophenolicus (strain ATCC 700700 / DSM 12829 / CIP 107037 / JCM 12360 / KCTC 9906 / NCIMB 13794 / A6) (Arthrobacter chlorophenolicus), this protein is Threonine--tRNA ligase.